Here is a 345-residue protein sequence, read N- to C-terminus: Phosphoribosylformylglycinamidine cyclo-ligase (345 aa).

The protein belongs to the AIR synthase family.

The protein localises to the cytoplasm. The catalysed reaction is 2-formamido-N(1)-(5-O-phospho-beta-D-ribosyl)acetamidine + ATP = 5-amino-1-(5-phospho-beta-D-ribosyl)imidazole + ADP + phosphate + H(+). It participates in purine metabolism; IMP biosynthesis via de novo pathway; 5-amino-1-(5-phospho-D-ribosyl)imidazole from N(2)-formyl-N(1)-(5-phospho-D-ribosyl)glycinamide: step 2/2. This Tolumonas auensis (strain DSM 9187 / NBRC 110442 / TA 4) protein is Phosphoribosylformylglycinamidine cyclo-ligase.